Consider the following 182-residue polypeptide: uncharacterized protein (182 aa).

Disordered regions lie at residues 17-53 (AVSQAQGRPGHPDAPPNIYEGGLGSPQPQCPSAQGSK) and 128-159 (DSLGSSASSSSMDPDKGALPQPSPSRLRPKRS). Residues 42–53 (PQPQCPSAQGSK) are compositionally biased toward polar residues. Residues 129–138 (SLGSSASSSS) show a composition bias toward low complexity.

This is an uncharacterized protein from Homo sapiens (Human).